The chain runs to 220 residues: Ribose-5-phosphate isomerase A (220 aa).

Substrate-binding positions include 28–31 (TGST), 81–84 (DGAD), and 94–97 (KGGG). Catalysis depends on glutamate 103, which acts as the Proton acceptor. A substrate-binding site is contributed by lysine 121.

Belongs to the ribose 5-phosphate isomerase family. As to quaternary structure, homodimer.

It catalyses the reaction aldehydo-D-ribose 5-phosphate = D-ribulose 5-phosphate. Its pathway is carbohydrate degradation; pentose phosphate pathway; D-ribose 5-phosphate from D-ribulose 5-phosphate (non-oxidative stage): step 1/1. Its function is as follows. Catalyzes the reversible conversion of ribose-5-phosphate to ribulose 5-phosphate. This is Ribose-5-phosphate isomerase A from Vesicomyosocius okutanii subsp. Calyptogena okutanii (strain HA).